Reading from the N-terminus, the 130-residue chain is Small ribosomal subunit protein uS11 (130 aa).

Belongs to the universal ribosomal protein uS11 family. In terms of assembly, part of the 30S ribosomal subunit. Interacts with proteins S7 and S18. Binds to IF-3.

Functionally, located on the platform of the 30S subunit, it bridges several disparate RNA helices of the 16S rRNA. Forms part of the Shine-Dalgarno cleft in the 70S ribosome. This chain is Small ribosomal subunit protein uS11, found in Thermotoga petrophila (strain ATCC BAA-488 / DSM 13995 / JCM 10881 / RKU-1).